The primary structure comprises 179 residues: Large ribosomal subunit protein uL6 (179 aa).

It belongs to the universal ribosomal protein uL6 family. Part of the 50S ribosomal subunit.

This protein binds to the 23S rRNA, and is important in its secondary structure. It is located near the subunit interface in the base of the L7/L12 stalk, and near the tRNA binding site of the peptidyltransferase center. The polypeptide is Large ribosomal subunit protein uL6 (Metamycoplasma arthritidis (strain 158L3-1) (Mycoplasma arthritidis)).